Reading from the N-terminus, the 171-residue chain is MFLVKMVLGFLIFLSPLCATGLDISQTDIIERSLNFLLFAGILWYFLAKKLRSFLHSKSLEISKRLEEIQAQLKVSKENKKKLLKELEQAKEKAELIISDANKEAYTITQKYELQTKMDVENLIKNSKALMDLEVKKIKRELVESVFKDLRESKKVSFNVQDCVNILKQRL.

A helical transmembrane segment spans residues 2-22 (FLVKMVLGFLIFLSPLCATGL).

The protein belongs to the ATPase B chain family. In terms of assembly, F-type ATPases have 2 components, F(1) - the catalytic core - and F(0) - the membrane proton channel. F(1) has five subunits: alpha(3), beta(3), gamma(1), delta(1), epsilon(1). F(0) has three main subunits: a(1), b(2) and c(10-14). The alpha and beta chains form an alternating ring which encloses part of the gamma chain. F(1) is attached to F(0) by a central stalk formed by the gamma and epsilon chains, while a peripheral stalk is formed by the delta and b chains.

Its subcellular location is the cell inner membrane. In terms of biological role, f(1)F(0) ATP synthase produces ATP from ADP in the presence of a proton or sodium gradient. F-type ATPases consist of two structural domains, F(1) containing the extramembraneous catalytic core and F(0) containing the membrane proton channel, linked together by a central stalk and a peripheral stalk. During catalysis, ATP synthesis in the catalytic domain of F(1) is coupled via a rotary mechanism of the central stalk subunits to proton translocation. Component of the F(0) channel, it forms part of the peripheral stalk, linking F(1) to F(0). The protein is ATP synthase subunit b of Helicobacter pylori (strain Shi470).